Here is a 379-residue protein sequence, read N- to C-terminus: Probable malonyl-CoA-acyl carrier protein transacylase, mitochondrial (379 aa).

The transit peptide at 1-23 directs the protein to the mitochondrion; it reads MLAARRLLRSPRITGALSWSRWS. Active-site residues include S158 and H275.

This sequence belongs to the type II malonyltransferase family.

Its subcellular location is the mitochondrion. The enzyme catalyses holo-[ACP] + malonyl-CoA = malonyl-[ACP] + CoA. The protein operates within lipid metabolism; fatty acid biosynthesis. Functionally, catalyzes the transfer of a malonyl moiety from malonyl-CoA to the free thiol group of the phosphopantetheine arm of the ACP protein. This suggests the existence of the biosynthesis of fatty acids in mitochondria. The sequence is that of Probable malonyl-CoA-acyl carrier protein transacylase, mitochondrial from Drosophila melanogaster (Fruit fly).